Consider the following 496-residue polypeptide: Aldehyde dehydrogenase 1A1 (496 aa).

N6-acetyllysine occurs at positions 86 and 123. Residues Ile-162 to Asn-165, Lys-188 to Glu-191, Gly-221 to Pro-222, and Gly-241 to Ser-242 contribute to the NAD(+) site. Lys-247 is modified (N6-acetyllysine). Glu-264 serves as the catalytic Proton acceptor. Position 264-266 (Glu-264–Gly-266) interacts with NAD(+). The active-site Nucleophile is the Cys-298. A mediates interaction with PRMT3 region spans residues Leu-331–Ser-496. Glu-344–Lys-348 is an NAD(+) binding site. N6-acetyllysine is present on residues Lys-348 and Lys-362. Residue Glu-395–Phe-397 coordinates NAD(+). Residue Lys-405 is modified to N6-acetyllysine. Phosphoserine is present on Ser-408. Residues Lys-414, Lys-430, and Lys-490 each carry the N6-acetyllysine modification.

It belongs to the aldehyde dehydrogenase family. As to quaternary structure, homotetramer. Interacts with PRMT3; the interaction is direct, inhibits ALDH1A1 aldehyde dehydrogenase activity and is independent of the methyltransferase activity of PRMT3. In terms of processing, the N-terminus is blocked most probably by acetylation.

It is found in the cytoplasm. The protein localises to the cytosol. The protein resides in the cell projection. Its subcellular location is the axon. The enzyme catalyses an aldehyde + NAD(+) + H2O = a carboxylate + NADH + 2 H(+). The catalysed reaction is all-trans-retinal + NAD(+) + H2O = all-trans-retinoate + NADH + 2 H(+). It catalyses the reaction 9-cis-retinal + NAD(+) + H2O = 9-cis-retinoate + NADH + 2 H(+). It carries out the reaction 11-cis-retinal + NAD(+) + H2O = 11-cis-retinoate + NADH + 2 H(+). The enzyme catalyses 13-cis-retinal + NAD(+) + H2O = 13-cis-retinoate + NADH + 2 H(+). The catalysed reaction is (E)-4-hydroxynon-2-enal + NAD(+) + H2O = (E)-4-hydroxynon-2-enoate + NADH + 2 H(+). It catalyses the reaction malonaldehyde + NAD(+) + H2O = 3-oxopropanoate + NADH + 2 H(+). It carries out the reaction hexanal + NAD(+) + H2O = hexanoate + NADH + 2 H(+). The enzyme catalyses propanal + NAD(+) + H2O = propanoate + NADH + 2 H(+). The catalysed reaction is 3-deoxyglucosone + NAD(+) + H2O = 2-dehydro-3-deoxy-D-gluconate + NADH + 2 H(+). It catalyses the reaction acetaldehyde + NAD(+) + H2O = acetate + NADH + 2 H(+). It carries out the reaction benzaldehyde + NAD(+) + H2O = benzoate + NADH + 2 H(+). The enzyme catalyses 4-aminobutanal + NAD(+) + H2O = 4-aminobutanoate + NADH + 2 H(+). Its pathway is cofactor metabolism; retinol metabolism. Functionally, cytosolic dehydrogenase that catalyzes the irreversible oxidation of a wide range of aldehydes to their corresponding carboxylic acid. Functions downstream of retinol dehydrogenases and catalyzes the oxidation of retinaldehyde into retinoic acid, the second step in the oxidation of retinol/vitamin A into retinoic acid. This pathway is crucial to control the levels of retinol and retinoic acid, two important molecules which excess can be teratogenic and cytotoxic. Also oxidizes aldehydes resulting from lipid peroxidation like (E)-4-hydroxynon-2-enal/HNE, malonaldehyde and hexanal that form protein adducts and are highly cytotoxic. By participating for instance to the clearance of (E)-4-hydroxynon-2-enal/HNE in the lens epithelium prevents the formation of HNE-protein adducts and lens opacification. Functions also downstream of fructosamine-3-kinase in the fructosamine degradation pathway by catalyzing the oxidation of 3-deoxyglucosone, the carbohydrate product of fructosamine 3-phosphate decomposition, which is itself a potent glycating agent that may react with lysine and arginine side-chains of proteins. Also has an aminobutyraldehyde dehydrogenase activity and is probably part of an alternative pathway for the biosynthesis of GABA/4-aminobutanoate in midbrain, thereby playing a role in GABAergic synaptic transmission. The sequence is that of Aldehyde dehydrogenase 1A1 from Oryctolagus cuniculus (Rabbit).